Here is a 909-residue protein sequence, read N- to C-terminus: ABC transporter A family member 10 (909 aa).

7 helical membrane passes run 35–55 (VLVP…LDVV), 320–340 (IASM…FPVI), 374–394 (FLTL…AIGL), 406–426 (FIFY…ASSI), 433–453 (ATVV…FLFG), 465–485 (GILA…YEFA), and 507–527 (LFYL…SIDL). Phosphoserine is present on Ser-555. An ABC transporter domain is found at 587–824 (IVCDNLKKVY…YGGSYVFTMT (238 aa)). 625–632 (GPNGAGKT) lines the ATP pocket.

The protein belongs to the ABC transporter superfamily. ABCA family. CPR flippase (TC 3.A.1.211) subfamily.

It localises to the membrane. In Arabidopsis thaliana (Mouse-ear cress), this protein is ABC transporter A family member 10 (ABCA10).